The primary structure comprises 243 residues: 2-C-methyl-D-erythritol 4-phosphate cytidylyltransferase (243 aa).

Belongs to the IspD/TarI cytidylyltransferase family. IspD subfamily.

It catalyses the reaction 2-C-methyl-D-erythritol 4-phosphate + CTP + H(+) = 4-CDP-2-C-methyl-D-erythritol + diphosphate. It participates in isoprenoid biosynthesis; isopentenyl diphosphate biosynthesis via DXP pathway; isopentenyl diphosphate from 1-deoxy-D-xylulose 5-phosphate: step 2/6. Its function is as follows. Catalyzes the formation of 4-diphosphocytidyl-2-C-methyl-D-erythritol from CTP and 2-C-methyl-D-erythritol 4-phosphate (MEP). This chain is 2-C-methyl-D-erythritol 4-phosphate cytidylyltransferase, found in Aeromonas hydrophila subsp. hydrophila (strain ATCC 7966 / DSM 30187 / BCRC 13018 / CCUG 14551 / JCM 1027 / KCTC 2358 / NCIMB 9240 / NCTC 8049).